A 309-amino-acid polypeptide reads, in one-letter code: Elongation factor Ts (309 aa).

The segment at 82–85 (TDFV) is involved in Mg(2+) ion dislocation from EF-Tu.

It belongs to the EF-Ts family.

Its subcellular location is the cytoplasm. Associates with the EF-Tu.GDP complex and induces the exchange of GDP to GTP. It remains bound to the aminoacyl-tRNA.EF-Tu.GTP complex up to the GTP hydrolysis stage on the ribosome. The protein is Elongation factor Ts of Rickettsia akari (strain Hartford).